Consider the following 146-residue polypeptide: Large ribosomal subunit protein uL11 (146 aa).

It belongs to the universal ribosomal protein uL11 family. Part of the ribosomal stalk of the 50S ribosomal subunit. Interacts with L10 and the large rRNA to form the base of the stalk. L10 forms an elongated spine to which L12 dimers bind in a sequential fashion forming a multimeric L10(L12)X complex. One or more lysine residues are methylated.

In terms of biological role, forms part of the ribosomal stalk which helps the ribosome interact with GTP-bound translation factors. In Blochmanniella floridana, this protein is Large ribosomal subunit protein uL11.